A 187-amino-acid chain; its full sequence is UPF0301 protein VSAL_I0547 (187 aa).

The protein belongs to the UPF0301 (AlgH) family.

In Aliivibrio salmonicida (strain LFI1238) (Vibrio salmonicida (strain LFI1238)), this protein is UPF0301 protein VSAL_I0547.